The primary structure comprises 245 residues: NAD(P)H-quinone oxidoreductase subunit K (245 aa).

Positions 58, 59, 123, and 154 each coordinate [4Fe-4S] cluster.

This sequence belongs to the complex I 20 kDa subunit family. As to quaternary structure, NDH-1 can be composed of about 15 different subunits; different subcomplexes with different compositions have been identified which probably have different functions. Requires [4Fe-4S] cluster as cofactor.

It localises to the cellular thylakoid membrane. It catalyses the reaction a plastoquinone + NADH + (n+1) H(+)(in) = a plastoquinol + NAD(+) + n H(+)(out). The enzyme catalyses a plastoquinone + NADPH + (n+1) H(+)(in) = a plastoquinol + NADP(+) + n H(+)(out). Functionally, NDH-1 shuttles electrons from an unknown electron donor, via FMN and iron-sulfur (Fe-S) centers, to quinones in the respiratory and/or the photosynthetic chain. The immediate electron acceptor for the enzyme in this species is believed to be plastoquinone. Couples the redox reaction to proton translocation, and thus conserves the redox energy in a proton gradient. Cyanobacterial NDH-1 also plays a role in inorganic carbon-concentration. In Nostoc sp. (strain PCC 7120 / SAG 25.82 / UTEX 2576), this protein is NAD(P)H-quinone oxidoreductase subunit K.